We begin with the raw amino-acid sequence, 287 residues long: Pyridoxal 5'-phosphate synthase subunit PdxS (287 aa).

D21 contributes to the D-ribose 5-phosphate binding site. K78 acts as the Schiff-base intermediate with D-ribose 5-phosphate in catalysis. G150 is a binding site for D-ribose 5-phosphate. A D-glyceraldehyde 3-phosphate-binding site is contributed by R162. Residues G211 and 232–233 contribute to the D-ribose 5-phosphate site; that span reads GS.

Belongs to the PdxS/SNZ family. As to quaternary structure, in the presence of PdxT, forms a dodecamer of heterodimers.

The enzyme catalyses aldehydo-D-ribose 5-phosphate + D-glyceraldehyde 3-phosphate + L-glutamine = pyridoxal 5'-phosphate + L-glutamate + phosphate + 3 H2O + H(+). Its pathway is cofactor biosynthesis; pyridoxal 5'-phosphate biosynthesis. Functionally, catalyzes the formation of pyridoxal 5'-phosphate from ribose 5-phosphate (RBP), glyceraldehyde 3-phosphate (G3P) and ammonia. The ammonia is provided by the PdxT subunit. Can also use ribulose 5-phosphate and dihydroxyacetone phosphate as substrates, resulting from enzyme-catalyzed isomerization of RBP and G3P, respectively. This is Pyridoxal 5'-phosphate synthase subunit PdxS from Francisella tularensis subsp. tularensis (strain FSC 198).